Consider the following 349-residue polypeptide: Isopentenyl-diphosphate delta-isomerase (349 aa).

5–6 (RK) serves as a coordination point for substrate. Residues serine 61, 62–64 (SMT), serine 92, and asparagine 120 each bind FMN. Position 92–94 (92–94 (SMR)) interacts with substrate. Substrate is bound at residue glutamine 159. Glutamate 160 provides a ligand contact to Mg(2+). FMN is bound by residues lysine 189, threonine 219, 269–271 (GLR), and 290–291 (AR).

This sequence belongs to the IPP isomerase type 2 family. As to quaternary structure, homooctamer. Dimer of tetramers. It depends on FMN as a cofactor. NADPH is required as a cofactor. Requires Mg(2+) as cofactor.

It localises to the cytoplasm. The catalysed reaction is isopentenyl diphosphate = dimethylallyl diphosphate. In terms of biological role, involved in the biosynthesis of isoprenoids. Catalyzes the 1,3-allylic rearrangement of the homoallylic substrate isopentenyl (IPP) to its allylic isomer, dimethylallyl diphosphate (DMAPP). This Picrophilus torridus (strain ATCC 700027 / DSM 9790 / JCM 10055 / NBRC 100828 / KAW 2/3) protein is Isopentenyl-diphosphate delta-isomerase.